A 717-amino-acid chain; its full sequence is Eukaryotic translation initiation factor 3 subunit B (717 aa).

A sufficient for interaction with HCR1 and TIF32 region spans residues 1-89 (MTVEDNLDID…VFIEYETGEM (89 aa)). A sufficient for interaction with PIC8 region spans residues 1–216 (MTVEDNLDID…GVQLWGGPDW (216 aa)). An RRM domain is found at 28 to 115 (SFIVVDGAPV…HKLLVNKLSE (88 aa)). 6 WD repeats span residues 183 to 221 (RERW…PPIC), 223 to 284 (FQHP…PVRT), 293 to 332 (GASM…LLDK), 445 to 484 (ELKD…NRHT), 506 to 549 (FDKK…DRKH), and 564 to 609 (SEHY…QREE).

The protein belongs to the eIF-3 subunit B family. As to quaternary structure, component of the eukaryotic translation initiation factor 3 (eIF-3) complex.

It is found in the cytoplasm. Its function is as follows. RNA-binding component of the eukaryotic translation initiation factor 3 (eIF-3) complex, which is involved in protein synthesis of a specialized repertoire of mRNAs and, together with other initiation factors, stimulates binding of mRNA and methionyl-tRNAi to the 40S ribosome. The eIF-3 complex specifically targets and initiates translation of a subset of mRNAs involved in cell proliferation. The polypeptide is Eukaryotic translation initiation factor 3 subunit B (Yarrowia lipolytica (strain CLIB 122 / E 150) (Yeast)).